The sequence spans 288 residues: Syntaxin-1B (288 aa).

A compositionally biased stretch (basic and acidic residues) spans M1 to D13. Residues M1–V20 form a disordered region. Residues M1 to K264 are Cytoplasmic-facing. 2 positions are modified to phosphoserine: S10 and S14. Positions M29–G104 form a coiled coil. The t-SNARE coiled-coil homology domain maps to L191–A253. A helical; Anchor for type IV membrane protein membrane pass occupies residues I265–L288.

It belongs to the syntaxin family. In terms of assembly, interacts with OTOF. Interacts with SYT6 and SYT8; the interaction is Ca(2+)-dependent. In terms of processing, phosphorylated by CK2.

It localises to the membrane. The protein localises to the nucleus. The protein resides in the cytoplasm. It is found in the cytoskeleton. Its subcellular location is the microtubule organizing center. It localises to the centrosome. The protein localises to the spindle. Its function is as follows. Potentially involved in docking of synaptic vesicles at presynaptic active zones. May mediate Ca(2+)-regulation of exocytosis acrosomal reaction in sperm. This Homo sapiens (Human) protein is Syntaxin-1B (STX1B).